The chain runs to 888 residues: Tyrosine-protein kinase receptor UFO (888 aa).

An N-terminal signal peptide occupies residues 1–18; that stretch reads MGRVPLAWWLALCCWGCA. Residues 19-86 form an interaction with GAS6 region; the sequence is AHKDTQTEAG…QTQVPLGEDW (68 aa). The Extracellular portion of the chain corresponds to 19–445; sequence AHKDTQTEAG…PPRAFSWPWW (427 aa). 2 Ig-like C2-type domains span residues 30 to 122 and 133 to 216; these read PFVG…TFVS and PYFL…ATIT. A glycan (N-linked (GlcNAc...) asparagine) is linked at Asn37. A disulfide bridge connects residues Cys50 and Cys111. 2 N-linked (GlcNAc...) asparagine glycosylation sites follow: Asn151 and Asn192. A disulfide bridge links Cys154 with Cys199. Fibronectin type-III domains follow at residues 221–325 and 330–422; these read RPHH…TTEG and PPEN…PWRP. N-linked (GlcNAc...) asparagine glycans are attached at residues Asn333, Asn339, and Asn395. The chain crosses the membrane as a helical span at residues 446–466; it reads YVLLGALVAAACVLILALFLV. The Cytoplasmic portion of the chain corresponds to 467–888; the sequence is HRRKKETRYG…PAPPGQEDGA (422 aa). A Protein kinase domain is found at 530-801; it reads VALGKTLGEG…ELREDLENTL (272 aa). ATP is bound by residues 536–544 and Lys561; that span reads LGEGEFGAV. Asp666 functions as the Proton acceptor in the catalytic mechanism. Phosphotyrosine; by autocatalysis occurs at positions 697, 773, and 815. The segment at 820–846 is disordered; it reads EGGSHLEPRGAAGGADPPTQPDPKDSC. The residue at position 860 (Tyr860) is a Phosphotyrosine; by autocatalysis. Positions 865–888 are disordered; sequence STAPGPTLSADRGCPAPPGQEDGA.

It belongs to the protein kinase superfamily. Tyr protein kinase family. AXL/UFO subfamily. Heterodimer and heterotetramer with ligand GAS6. Interacts with CBL, GRB2, LCK, NCK2, PIK3R1, PIK3R2, PIK3R3, PLCG1, SOCS1 and TNS2. Part of a complex including AXL, TNK2 and GRB2, in which GRB2 promotes AXL recruitment by TNK2. Post-translationally, monoubiquitinated upon GAS6-binding. A very small proportion of the receptor could be subjected to polyubiquitination in a very transient fashion. In terms of processing, phosphorylated at tyrosine residues by autocatalysis, which activates kinase activity. In terms of tissue distribution, in distinct substructures of a broad spectrum of developing tissues (in the late embryogenesis). In cells forming organ capsules as well as in connective tissue structures (in adult).

It localises to the cell membrane. The catalysed reaction is L-tyrosyl-[protein] + ATP = O-phospho-L-tyrosyl-[protein] + ADP + H(+). Its activity is regulated as follows. Activated by GAS6-binding and subsequent autophosphorylation. In terms of biological role, receptor tyrosine kinase that transduces signals from the extracellular matrix into the cytoplasm by binding growth factor GAS6 and which is thus regulating many physiological processes including cell survival, cell proliferation, migration and differentiation. Ligand binding at the cell surface induces dimerization and autophosphorylation of AXL. Following activation by ligand, AXL binds and induces tyrosine phosphorylation of PI3-kinase subunits PIK3R1, PIK3R2 and PIK3R3; but also GRB2, PLCG1, LCK and PTPN11. Other downstream substrate candidates for AXL are CBL, NCK2, SOCS1 and TNS2. Recruitment of GRB2 and phosphatidylinositol 3 kinase regulatory subunits by AXL leads to the downstream activation of the AKT kinase. GAS6/AXL signaling plays a role in various processes such as endothelial cell survival during acidification by preventing apoptosis, optimal cytokine signaling during human natural killer cell development, hepatic regeneration, gonadotropin-releasing hormone neuron survival and migration, platelet activation, or regulation of thrombotic responses. Also plays an important role in inhibition of Toll-like receptors (TLRs)-mediated innate immune response. The chain is Tyrosine-protein kinase receptor UFO (Axl) from Mus musculus (Mouse).